The sequence spans 241 residues: MATTLKPETLQKKEKAQQKTAEERAAAKKVRKAANKEKRKVIFDRAAAYQKEYTEAERSVIKAKRDAKASNSYYVDAQPKLVFVVRIKGINKIPPKPRKVLQLLRLTQINAGVFVRLTKATSELIKLAEPYVAYGYPSLSTIRQLVYKRGFGKVNKQRIALSDNAIIEANLGKFNILSIEDLIHEIYTVGPNFKQVSNFLWPFKLSNPNGGFRARKFQHFIQGGDTGNREQFINALVKQMN.

A disordered region spans residues 1–32 (MATTLKPETLQKKEKAQQKTAEERAAAKKVRK). A compositionally biased stretch (basic and acidic residues) spans 9-26 (TLQKKEKAQQKTAEERAA).

It belongs to the universal ribosomal protein uL30 family. As to quaternary structure, component of the large ribosomal subunit. Mature ribosomes consist of a small (40S) and a large (60S) subunit. The 40S subunit contains about 32 different proteins and 1 molecule of RNA (18S). The 60S subunit contains 45 different proteins and 3 molecules of RNA (25S, 5.8S and 5S).

The protein resides in the cytoplasm. In terms of biological role, component of the ribosome, a large ribonucleoprotein complex responsible for the synthesis of proteins in the cell. The small ribosomal subunit (SSU) binds messenger RNAs (mRNAs) and translates the encoded message by selecting cognate aminoacyl-transfer RNA (tRNA) molecules. The large subunit (LSU) contains the ribosomal catalytic site termed the peptidyl transferase center (PTC), which catalyzes the formation of peptide bonds, thereby polymerizing the amino acids delivered by tRNAs into a polypeptide chain. The nascent polypeptides leave the ribosome through a tunnel in the LSU and interact with protein factors that function in enzymatic processing, targeting, and the membrane insertion of nascent chains at the exit of the ribosomal tunnel. This is Large ribosomal subunit protein uL30 from Candida albicans (strain SC5314 / ATCC MYA-2876) (Yeast).